Consider the following 318-residue polypeptide: Protease HtpX homolog (318 aa).

Helical transmembrane passes span 6 to 26 (TAML…LIGG) and 28 to 48 (GGMM…YWNS). A Zn(2+)-binding site is contributed by His-130. The active site involves Glu-131. His-134 provides a ligand contact to Zn(2+). The next 2 helical transmembrane spans lie at 145–165 (ITAT…FFGG) and 173–193 (PLGF…AMLV). Glu-202 serves as a coordination point for Zn(2+). The disordered stretch occupies residues 284–318 (NVSTGPVRAVNPTRKSRSVPNTGRGGSQPPRGPWS).

It belongs to the peptidase M48B family. It depends on Zn(2+) as a cofactor.

Its subcellular location is the cell inner membrane. The protein is Protease HtpX homolog of Rhizobium etli (strain ATCC 51251 / DSM 11541 / JCM 21823 / NBRC 15573 / CFN 42).